The primary structure comprises 453 residues: Midnolin (453 aa).

The Ubiquitin-like domain occupies 20 to 94; the sequence is MNLNIQSTTG…LTLLPSVEAG (75 aa). Disordered regions lie at residues 185–219, 231–256, 330–374, and 390–434; these read HLASCTPGSTPPTTLSPTASTHRDGPHSSPLTTSV, PCAEQVPCSSRGTEGTSSSASSRSRK, SQAR…QTEN, and QKRL…IDFE. Composition is skewed to low complexity over residues 188 to 204 and 239 to 252; these read SCTPGSTPPTTLSPTAS and SSRGTEGTSSSASS. Polar residues predominate over residues 330–362; sequence SQARNPKATSPQSSEPQQTTHPVGHCQAQTRTC. The segment covering 365-374 has biased composition (basic and acidic residues); sequence SGDRLRQTEN. Over residues 390–399 the composition is skewed to basic residues; that stretch reads QKRLRRKARR. Residues 415 to 428 are compositionally biased toward low complexity; that stretch reads RTSSNSSTSSGEGS.

Its subcellular location is the nucleus. It localises to the cytoplasm. The protein localises to the cytosol. The protein resides in the nucleolus. Its function is as follows. Facilitates ubiquitin-independent proteasomal degradation of polycomb protein CBX4. Plays a role in inhibiting the activity of glucokinase GCK and both glucose-induced and basal insulin secretion. This Xenopus tropicalis (Western clawed frog) protein is Midnolin (midn).